We begin with the raw amino-acid sequence, 513 residues long: Protein disulfide-isomerase (513 aa).

Residues 1 to 23 form the signal peptide; that stretch reads MAIRSKAWISLLLALAVALSARA. In terms of domain architecture, Thioredoxin 1 spans 24 to 145; the sequence is EEEPAAAAEG…IVDYLKKQVG (122 aa). Catalysis depends on nucleophile residues C63 and C66. Cysteines 63 and 66 form a disulfide. N279 carries an N-linked (GlcNAc...) asparagine glycan. In terms of domain architecture, Thioredoxin 2 spans 366 to 485; that stretch reads FRNSEPIPEV…IVDFIKKSKE (120 aa). Active-site nucleophile residues include C408 and C411. Residues C408 and C411 are joined by a disulfide bond. The segment at 485-513 is disordered; that stretch reads ETAAPHHHHHPGATGIREGSRAEPVKDEL. Positions 502-513 are enriched in basic and acidic residues; that stretch reads EGSRAEPVKDEL. Residues 510–513 carry the Prevents secretion from ER motif; the sequence is KDEL.

The protein belongs to the protein disulfide isomerase family.

It is found in the endoplasmic reticulum lumen. The catalysed reaction is Catalyzes the rearrangement of -S-S- bonds in proteins.. In terms of biological role, participates in the folding of proteins containing disulfide bonds, may be involved in glycosylation, prolyl hydroxylation and triglyceride transfer. This chain is Protein disulfide-isomerase (PDI), found in Zea mays (Maize).